The sequence spans 116 residues: Large ribosomal subunit protein uL18 (116 aa).

This sequence belongs to the universal ribosomal protein uL18 family. In terms of assembly, part of the 50S ribosomal subunit; part of the 5S rRNA/L5/L18/L25 subcomplex. Contacts the 5S and 23S rRNAs.

This is one of the proteins that bind and probably mediate the attachment of the 5S RNA into the large ribosomal subunit, where it forms part of the central protuberance. This is Large ribosomal subunit protein uL18 from Pseudomonas putida (strain GB-1).